The chain runs to 185 residues: Elongation factor P (185 aa).

The protein belongs to the elongation factor P family.

The protein localises to the cytoplasm. It participates in protein biosynthesis; polypeptide chain elongation. Its function is as follows. Involved in peptide bond synthesis. Stimulates efficient translation and peptide-bond synthesis on native or reconstituted 70S ribosomes in vitro. Probably functions indirectly by altering the affinity of the ribosome for aminoacyl-tRNA, thus increasing their reactivity as acceptors for peptidyl transferase. The polypeptide is Elongation factor P (Symbiobacterium thermophilum (strain DSM 24528 / JCM 14929 / IAM 14863 / T)).